The following is an 877-amino-acid chain: Bifunctional uridylyltransferase/uridylyl-removing enzyme (877 aa).

Residues 1-335 (MDGPNSDRAH…HRDDAFSPTP (335 aa)) form a uridylyltransferase region. Residues 336–695 (VNDHFQAVND…LRPESLRGSV (360 aa)) are uridylyl-removing. The HD domain maps to 454-576 (VDEHTLFVVR…VRNQNTLNHL (123 aa)). ACT domains lie at 696-778 (EVFI…AVSR) and 805-877 (ILEL…VGDQ).

This sequence belongs to the GlnD family. Requires Mg(2+) as cofactor.

The catalysed reaction is [protein-PII]-L-tyrosine + UTP = [protein-PII]-uridylyl-L-tyrosine + diphosphate. It carries out the reaction [protein-PII]-uridylyl-L-tyrosine + H2O = [protein-PII]-L-tyrosine + UMP + H(+). Its activity is regulated as follows. Uridylyltransferase (UTase) activity is inhibited by glutamine, while glutamine activates uridylyl-removing (UR) activity. Functionally, modifies, by uridylylation and deuridylylation, the PII regulatory proteins (GlnB and homologs), in response to the nitrogen status of the cell that GlnD senses through the glutamine level. Under low glutamine levels, catalyzes the conversion of the PII proteins and UTP to PII-UMP and PPi, while under higher glutamine levels, GlnD hydrolyzes PII-UMP to PII and UMP (deuridylylation). Thus, controls uridylylation state and activity of the PII proteins, and plays an important role in the regulation of nitrogen fixation and metabolism. This is Bifunctional uridylyltransferase/uridylyl-removing enzyme from Methylococcus capsulatus (strain ATCC 33009 / NCIMB 11132 / Bath).